Here is a 452-residue protein sequence, read N- to C-terminus: Scaffold protein ILK (452 aa).

ANK repeat units lie at residues 2–30 (DDIF…LNQG), 31–63 (DDHG…INVM), 64–96 (NRGD…INAV), 97–129 (NEHG…VSIA), and 130–174 (NKYS…GTTR). Residues 193–446 (LSLSQKLNEN…PKFDMIVPIL (254 aa)) form the Protein kinase domain. ATP-binding residues include Asn-200, Asn-202, Ser-204, His-270, Met-272, and Asn-279. A Mg(2+)-binding site is contributed by Asp-339. Lys-341 lines the ATP pocket. Positions 363–371 (KKPEEINRR) match the Nuclear localization signal motif.

It belongs to the protein kinase superfamily. TKL Ser/Thr protein kinase family. Interacts with PXN/PAXILLIN (via LD motif 4).

It is found in the cell junction. The protein localises to the focal adhesion. It localises to the cell membrane. The protein resides in the cell projection. Its subcellular location is the lamellipodium. It is found in the cytoplasm. The protein localises to the myofibril. It localises to the sarcomere. The protein resides in the nucleus. Its subcellular location is the cytoskeleton. It is found in the microtubule organizing center. The protein localises to the centrosome. It localises to the cell cortex. In terms of biological role, scaffold protein which mediates protein-protein interactions during a range of cellular events including focal adhesion assembly, cell adhesion and cell migration. This is Scaffold protein ILK from Gallus gallus (Chicken).